The primary structure comprises 231 residues: Response regulator Rre1 (231 aa).

Residues 6-123 (SLLLVDDEPG…ELEAIVRNLL (118 aa)) enclose the Response regulatory domain. Asp56 bears the 4-aspartylphosphate mark. In terms of domain architecture, HTH luxR-type spans 163–228 (PSPIKLDFTP…ELVRFALQHG (66 aa)). The H-T-H motif DNA-binding region spans 187–206 (NKEIAAQLKTSVRNVEKYVS).

Interacts with histidine kinase Hik2; may accept phosphate from Hik2.

Its function is as follows. Member of at least 2 two-component regulatory systems Hik2/Rre1 and Hik34/Rre1. Responds to hyperosmotic stress, regulates expression of at least 24 genes including dnaK2 and hspA with Hik34 and sigB (sll0306), sll0528, slr1119, slr0852 and ssr3188 with Hik2. Responds to salt stress, regulates expression of at least 24 genes including adhA, dnaK2 and hspA with Hik34. Binds the adhA promoter. Phosphorylated by Hik2 in vitro. Phosphorylated protein has 10-fold higher affinity for DNA than unphosphorylated protein. This chain is Response regulator Rre1, found in Synechocystis sp. (strain ATCC 27184 / PCC 6803 / Kazusa).